The following is a 210-amino-acid chain: Potassium-transporting ATPase KdpC subunit (210 aa).

A helical transmembrane segment spans residues Leu-13–Ile-33.

Belongs to the KdpC family. In terms of assembly, the system is composed of three essential subunits: KdpA, KdpB and KdpC.

The protein localises to the cell membrane. Part of the high-affinity ATP-driven potassium transport (or Kdp) system, which catalyzes the hydrolysis of ATP coupled with the electrogenic transport of potassium into the cytoplasm. This subunit acts as a catalytic chaperone that increases the ATP-binding affinity of the ATP-hydrolyzing subunit KdpB by the formation of a transient KdpB/KdpC/ATP ternary complex. The polypeptide is Potassium-transporting ATPase KdpC subunit (Clostridium kluyveri (strain ATCC 8527 / DSM 555 / NBRC 12016 / NCIMB 10680 / K1)).